The sequence spans 362 residues: Biotin synthase (362 aa).

One can recognise a Radical SAM core domain in the interval 46–273; that stretch reads NEVQVSTLLS…ASHVRLSAGR (228 aa). Residues C61, C65, and C68 each coordinate [4Fe-4S] cluster. Residues C105, C136, C196, and R268 each coordinate [2Fe-2S] cluster.

The protein belongs to the radical SAM superfamily. Biotin synthase family. Homodimer. [4Fe-4S] cluster serves as cofactor. [2Fe-2S] cluster is required as a cofactor.

It carries out the reaction (4R,5S)-dethiobiotin + (sulfur carrier)-SH + 2 reduced [2Fe-2S]-[ferredoxin] + 2 S-adenosyl-L-methionine = (sulfur carrier)-H + biotin + 2 5'-deoxyadenosine + 2 L-methionine + 2 oxidized [2Fe-2S]-[ferredoxin]. It participates in cofactor biosynthesis; biotin biosynthesis; biotin from 7,8-diaminononanoate: step 2/2. Catalyzes the conversion of dethiobiotin (DTB) to biotin by the insertion of a sulfur atom into dethiobiotin via a radical-based mechanism. In Aeromonas salmonicida (strain A449), this protein is Biotin synthase.